The following is a 132-amino-acid chain: Holo-[acyl-carrier-protein] synthase (132 aa).

The Mg(2+) site is built by aspartate 8 and glutamate 62.

The protein belongs to the P-Pant transferase superfamily. AcpS family. Mg(2+) is required as a cofactor.

The protein resides in the cytoplasm. The enzyme catalyses apo-[ACP] + CoA = holo-[ACP] + adenosine 3',5'-bisphosphate + H(+). Functionally, transfers the 4'-phosphopantetheine moiety from coenzyme A to a Ser of acyl-carrier-protein. The sequence is that of Holo-[acyl-carrier-protein] synthase from Methylibium petroleiphilum (strain ATCC BAA-1232 / LMG 22953 / PM1).